Reading from the N-terminus, the 489-residue chain is MHLKKGKRSISTVWRLLWKRFYSVNSKTNMHFSRSRKKPVTNFTRTNGLLLSCNGDTFPYLRTLWRYFNAPGNLMFVTTNIVAFMGIVTYNTLVTISSERAFEEQMMAAQVSLAKQREELETTALSLPRDIELRGEEDDIKWEQPDVAHVREDPLVEEQNAKLDTPIKQYTLGDLILNKRENVTDYDSQRAKASIFHMLYAYMLYRDVIQPTTMTQNNNSEEWRREVELLTKGKEVQGTHRRIDVFYDLWNKNFDKIVTSPEKVQNFQLPNWSKYPTILKFICTELHDNSLKTLGEFKQFYGKVRSNEVKKLLGLWLYDHSFLFPHNIYDNRTEEDFYDILINDSMQDNRIFQKYSSIVMNPYNERTQLFFPNVNSPSVNKPVPSISLETYTRLLKGYINLQETGCKYDYNDNIFKLISILKLNCFLQRNKKKHAGPTVRILLPRDEDRSQILGTISQAEKRTCYQILSKNRDVVALLKRISDIQADSS.

It localises to the mitochondrion inner membrane. In terms of biological role, required for the expression of the mitochondrial gene for cytochrome c oxidase subunit III (COX3). This Saccharomyces cerevisiae (strain ATCC 204508 / S288c) (Baker's yeast) protein is COX3 mRNA-specific translational activator PET494 (PET494).